The sequence spans 249 residues: Salivary antigen-5 (249 aa).

The first 26 residues, 1 to 26, serve as a signal peptide directing secretion; that stretch reads MAKTQCPLVFSLLALALIGTLQSSAA. Residues 50-193 enclose the SCP domain; sequence SIHNYYRNLT…WYAGYLVCNY (144 aa). N-linked (GlcNAc...) asparagine glycans are attached at residues Asn57, Asn127, and Asn168.

The protein belongs to the CRISP family. Venom allergen 5-like subfamily. As to quaternary structure, monomeric in solution. Requires Cu(2+) as cofactor. In terms of tissue distribution, saliva (at protein level). Salivary gland (at protein level).

Its subcellular location is the secreted. Its function is as follows. Antioxidant protein that scavenges superoxide radicals. Removes superoxide radicals produced by PMA-stimulated host neutrophils. Inhibits host platelet aggregation induced by low doses of collagen by interfering with the pro-aggregatory properties of reactive oxygen species on platelets. Binds to heparin and sulfated glycosaminoglycans. The polypeptide is Salivary antigen-5 (Dipetalogaster maximus (Blood-sucking bug)).